We begin with the raw amino-acid sequence, 306 residues long: 17-beta-hydroxysteroid dehydrogenase type 3 (306 aa).

44 to 73 (GQWAVITGAGDGIGKAYSFELARHGLNVVL) serves as a coordination point for NADP(+). Ser181 contacts substrate. Tyr194 (proton acceptor) is an active-site residue.

It belongs to the short-chain dehydrogenases/reductases (SDR) family. 17-beta-HSD 3 subfamily.

It is found in the endoplasmic reticulum. It carries out the reaction a 17beta-hydroxy steroid + NADP(+) = a 17-oxo steroid + NADPH + H(+). The catalysed reaction is testosterone + NADP(+) = androst-4-ene-3,17-dione + NADPH + H(+). The enzyme catalyses 17beta-estradiol + NADP(+) = estrone + NADPH + H(+). It catalyses the reaction 3beta-hydroxyandrost-5-en-17-one + NADPH + H(+) = androst-5-en-3beta,17beta-diol + NADP(+). It carries out the reaction 17beta-hydroxy-5alpha-androstan-3-one + NADP(+) = 5alpha-androstan-3,17-dione + NADPH + H(+). The catalysed reaction is androsterone + NADPH + H(+) = 5alpha-androstane-3alpha,17beta-diol + NADP(+). The enzyme catalyses 3beta-hydroxy-5alpha-androstan-17-one + NADPH + H(+) = 5alpha-androstane-3beta,17beta-diol + NADP(+). It catalyses the reaction androst-4-ene-3,11,17-trione + NADPH + H(+) = 17beta-hydroxyandrost-4-ene-3,11-dione + NADP(+). It carries out the reaction 11beta-hydroxyandrost-4-ene-3,17-dione + NADPH + H(+) = 11beta,17beta-dihydroxyandrost-4-ene-3-one + NADP(+). It functions in the pathway hormone biosynthesis; testosterone biosynthesis. The protein operates within steroid metabolism. Functionally, catalyzes the conversion of 17-oxosteroids to 17beta-hydroxysteroids. Favors the reduction of androstenedione to testosterone. Testosterone is the key androgen driving male development and function. Uses NADPH while the two other EDH17B enzymes use NADH. Androgens such as epiandrosterone, dehydroepiandrosterone, androsterone and androstanedione are accepted as substrates and reduced at C-17. Can reduce 11-ketoandrostenedione as well as 11beta-hydroxyandrostenedione at C-17 to the respective testosterone forms. Plays a role in the rate-limiting-step for the maximum level of testosterone production by the testis but does not affect basal testosterone production. This is 17-beta-hydroxysteroid dehydrogenase type 3 from Rattus norvegicus (Rat).